The sequence spans 134 residues: MVSGPGHGSRNPERSFIINMKRVRMMMNSFNLFLMKYNFKMVFMVRPAPRGGADPEGVRSGINYNNYINIIIIYYIMMYLFMFYNINNYFMFNKYNMYIIFFNNYTINSYFGGIGRHDTTKMYYFTVWRFKSFK.

It localises to the mitochondrion. This is an uncharacterized protein from Saccharomyces cerevisiae (strain ATCC 204508 / S288c) (Baker's yeast).